The sequence spans 156 residues: Nucleosome assembly protein 1-like 5 (156 aa).

Positions 1 to 16 are enriched in basic and acidic residues; the sequence is MADPEKQGPAESRAED. The segment at 1–58 is disordered; the sequence is MADPEKQGPAESRAEDEVMEGAQGGEDAATGDSAAAPAAEEPQAPAENAPKPKKDFME. The segment covering 34 to 49 has biased composition (low complexity); sequence AAAPAAEEPQAPAENA. A coiled-coil region spans residues 68–94; it reads VLALKKLQKRCDKIEAKFDKEFQALEK. The tract at residues 120 to 156 is disordered; sequence TLEGEDDEDDEEEDDEEEEEEEEAAAGATGGPNFAKK. The segment covering 122-143 has biased composition (acidic residues); it reads EGEDDEDDEEEDDEEEEEEEEA.

It belongs to the nucleosome assembly protein (NAP) family.

Its subcellular location is the nucleus. This chain is Nucleosome assembly protein 1-like 5 (Nap1l5), found in Mus musculus (Mouse).